Reading from the N-terminus, the 187-residue chain is Ribosome-recycling factor (187 aa).

This sequence belongs to the RRF family.

The protein resides in the cytoplasm. Responsible for the release of ribosomes from messenger RNA at the termination of protein biosynthesis. May increase the efficiency of translation by recycling ribosomes from one round of translation to another. The sequence is that of Ribosome-recycling factor from Flavobacterium johnsoniae (strain ATCC 17061 / DSM 2064 / JCM 8514 / BCRC 14874 / CCUG 350202 / NBRC 14942 / NCIMB 11054 / UW101) (Cytophaga johnsonae).